We begin with the raw amino-acid sequence, 525 residues long: GMP synthase [glutamine-hydrolyzing] (525 aa).

The Glutamine amidotransferase type-1 domain occupies R9–L207. Catalysis depends on C86, which acts as the Nucleophile. Catalysis depends on residues H181 and E183. The region spanning W208–R400 is the GMPS ATP-PPase domain. Residue S235 to S241 coordinates ATP.

In terms of assembly, homodimer.

It catalyses the reaction XMP + L-glutamine + ATP + H2O = GMP + L-glutamate + AMP + diphosphate + 2 H(+). The protein operates within purine metabolism; GMP biosynthesis; GMP from XMP (L-Gln route): step 1/1. Catalyzes the synthesis of GMP from XMP. This chain is GMP synthase [glutamine-hydrolyzing], found in Salmonella schwarzengrund (strain CVM19633).